Reading from the N-terminus, the 69-residue chain is uncharacterized protein (69 aa).

A helical transmembrane segment spans residues 13–35 (IRSINPTLLNFINYFLLIVPQFI).

The protein resides in the membrane. This is an uncharacterized protein from Saccharomyces cerevisiae (strain ATCC 204508 / S288c) (Baker's yeast).